Consider the following 228-residue polypeptide: Phosphoglycolate phosphatase (228 aa).

Catalysis depends on Asp-9, which acts as the Nucleophile. Mg(2+) is bound by residues Asp-9 and Asp-11. Residue Lys-151 participates in substrate binding. Mg(2+)-binding residues include Asp-174 and Asp-178.

It belongs to the archaeal SPP-like hydrolase family. Mg(2+) is required as a cofactor.

It carries out the reaction 2-phosphoglycolate + H2O = glycolate + phosphate. Its function is as follows. Catalyzes the dephosphorylation of 2-phosphoglycolate. The chain is Phosphoglycolate phosphatase from Pyrobaculum islandicum (strain DSM 4184 / JCM 9189 / GEO3).